The chain runs to 308 residues: MSEPVLAVSGVNKSFPIYRSPWQALWHALNPKADVKVFQALRDIELTVYRGETIGIVGHNGAGKSTLLQLITGVMQPDCGQITRTGRVVGLLELGSGFNPEFTGRENIFFNGAILGMSQREMDDRLERILSFAAIGDFIDQPVKNYSSGMMVRLAFSVIINTDPDVLIIDEALAVGDDAFQRKCYARLKQLQSQGVTILLVSHAAGSVIELCDRAVLLDRGEVLLQGEPKAVVHNYHKLLHMEGDERARFRYHLRQTGRGDSYISDESTSEPKIKSAPGILSVDLQPQSTVWYESKGAVLSDVHIESF.

One can recognise an ABC transporter domain in the interval 6 to 245; it reads LAVSGVNKSF…YHKLLHMEGD (240 aa). Residue 58–65 coordinates ATP; the sequence is GHNGAGKS.

Belongs to the ABC transporter superfamily.

Influences the expression of the surface array protein gene (vapA). May have both regulatory and transport activities. The polypeptide is ABC transporter protein AbcA (abcA) (Aeromonas salmonicida).